The primary structure comprises 883 residues: Sodium/sulfate cotransporter 2 (883 aa).

6 helical membrane passes run 3-23 (FGWQGSVSIAFTALAFVVMAA), 30-50 (VTFTVLLAFLTAFDGQIVTVA), 60-80 (GLLTVIFLYWVAEGITQTGGL), 106-126 (MCLSAFLNNTPCVTFMIPILI), 139-159 (LLIPLSYASVLGGTCTSIGTS), and 185-205 (IFDIAPYGVPYALWGFVFILL). RCK C-terminal domains are found at residues 211 to 295 (LPGN…EFGL), 317 to 401 (VFTP…SKNN), 406 to 491 (VRAV…FPGL), and 497 to 583 (EQVD…DKSF). The next 6 helical transmembrane spans lie at 600 to 620 (MVIGVLLATGMVLTQIVGGLK), 624 to 644 (YIHLWPAAVLTSALMLLTGCM), 657 to 677 (VYLTIAAAFGVSAALEGTGVA), 693 to 713 (SDGAALIAIYIATAMLSELLT), 774 to 794 (FAIIGAPFQIWLMIVAGFILC), and 802 to 822 (VWIVSWICTAGIVLLPALYFL). Residues 857 to 883 (QASRTGSDGTGSSDSPRALGVPKVITA) are disordered. Positions 861-871 (TGSDGTGSSDS) are enriched in low complexity.

This sequence belongs to the divalent anion:Na+ symporter (DASS) superfamily. Na+/sulfate symporter (TC 2.A.47.4) family.

The protein localises to the cell membrane. In terms of biological role, na(+)/sulfate cotransporter with a probable high-affinity for sulfate and a proteasome dependent turnover. The polypeptide is Sodium/sulfate cotransporter 2 (SLT2) (Chlamydomonas reinhardtii (Chlamydomonas smithii)).